We begin with the raw amino-acid sequence, 277 residues long: Large ribosomal subunit protein uL2 (277 aa).

The tract at residues 222-277 is disordered; it reads GVAMNPVDHPHGGGEGRTSGGRHPVTPWGKPTKGKKTRSNKATDKFIMRSRHQRKK.

Belongs to the universal ribosomal protein uL2 family. In terms of assembly, part of the 50S ribosomal subunit. Forms a bridge to the 30S subunit in the 70S ribosome.

Functionally, one of the primary rRNA binding proteins. Required for association of the 30S and 50S subunits to form the 70S ribosome, for tRNA binding and peptide bond formation. It has been suggested to have peptidyltransferase activity; this is somewhat controversial. Makes several contacts with the 16S rRNA in the 70S ribosome. This chain is Large ribosomal subunit protein uL2, found in Brucella ovis (strain ATCC 25840 / 63/290 / NCTC 10512).